Here is a 514-residue protein sequence, read N- to C-terminus: 2-isopropylmalate synthase (514 aa).

The Pyruvate carboxyltransferase domain occupies 5-268 (LIIFDTTLRD…DVGIDTSQIV (264 aa)). Residues Asp14, His202, His204, and Asn239 each coordinate Mn(2+). The interval 395–514 (KFVSLSQHSE…KDDKVNPQRS (120 aa)) is regulatory domain.

Belongs to the alpha-IPM synthase/homocitrate synthase family. LeuA type 1 subfamily. As to quaternary structure, homodimer. Mn(2+) serves as cofactor.

It localises to the cytoplasm. It catalyses the reaction 3-methyl-2-oxobutanoate + acetyl-CoA + H2O = (2S)-2-isopropylmalate + CoA + H(+). It participates in amino-acid biosynthesis; L-leucine biosynthesis; L-leucine from 3-methyl-2-oxobutanoate: step 1/4. Functionally, catalyzes the condensation of the acetyl group of acetyl-CoA with 3-methyl-2-oxobutanoate (2-ketoisovalerate) to form 3-carboxy-3-hydroxy-4-methylpentanoate (2-isopropylmalate). This Burkholderia lata (strain ATCC 17760 / DSM 23089 / LMG 22485 / NCIMB 9086 / R18194 / 383) protein is 2-isopropylmalate synthase.